The sequence spans 111 residues: Cytochrome c (111 aa).

Residue Ala1 is modified to N-acetylalanine. The heme c site is built by Cys22, Cys25, and His26. The residue at position 80 (Lys80) is an N6,N6,N6-trimethyllysine. Met88 is a heme c binding site. N6,N6,N6-trimethyllysine is present on Lys94.

It belongs to the cytochrome c family. In terms of processing, binds 1 heme c group covalently per subunit.

It localises to the mitochondrion intermembrane space. In terms of biological role, electron carrier protein. The oxidized form of the cytochrome c heme group can accept an electron from the heme group of the cytochrome c1 subunit of cytochrome reductase. Cytochrome c then transfers this electron to the cytochrome oxidase complex, the final protein carrier in the mitochondrial electron-transport chain. This is Cytochrome c from Gossypium barbadense (Sea Island cotton).